Here is a 404-residue protein sequence, read N- to C-terminus: Probable ribosomal oxygenase HI_0396 (404 aa).

One can recognise a JmjC domain in the interval 102 to 231; that stretch reads ELGQLWNKFG…LIDGISKGFC (130 aa). Residues H135, D137, and H199 each contribute to the Fe cation site.

The protein belongs to the ROX family. Fe(2+) serves as cofactor.

Its function is as follows. Oxygenase that catalyzes the hydroxylation of a ribosomal protein. The sequence is that of Probable ribosomal oxygenase HI_0396 from Haemophilus influenzae (strain ATCC 51907 / DSM 11121 / KW20 / Rd).